The primary structure comprises 209 residues: MISTSQIPDSFVSPCRRASVSRTTKETDVQVTIDLDGSGNCRAQTGIPFLDHMLQQIASHAAIDLDVRATGDIEIDDHHTNEDVGITLGQALLQALGDKKGIVRFGHFVAPLDEALVQVALDFSGRPHLSYGLEIPTQRVGTYDTQLVREFFVALVNHSQMTLHIRQLDGINSHHIIEATFKAFARAMSMAIAIDPRRAGIIPSSKGVL.

It belongs to the imidazoleglycerol-phosphate dehydratase family.

The protein resides in the cytoplasm. The enzyme catalyses D-erythro-1-(imidazol-4-yl)glycerol 3-phosphate = 3-(imidazol-4-yl)-2-oxopropyl phosphate + H2O. It functions in the pathway amino-acid biosynthesis; L-histidine biosynthesis; L-histidine from 5-phospho-alpha-D-ribose 1-diphosphate: step 6/9. This chain is Imidazoleglycerol-phosphate dehydratase, found in Microcystis aeruginosa (strain NIES-843 / IAM M-2473).